A 254-amino-acid polypeptide reads, in one-letter code: Citrate synthase-lysine N-methyltransferase CSKMT, mitochondrial (254 aa).

The N-terminal 45 residues, 1-45 (MLLNRFLVPLRSLQKLTQARRWHQTSLINDLVVNMDKKAMWDRFY), are a transit peptide targeting the mitochondrion.

This sequence belongs to the methyltransferase superfamily.

The protein resides in the mitochondrion. It carries out the reaction L-lysyl-[citrate synthase] + S-adenosyl-L-methionine = N(6)-methyl-L-lysyl-[citrate synthase] + S-adenosyl-L-homocysteine + H(+). The catalysed reaction is N(6)-methyl-L-lysyl-[citrate synthase] + S-adenosyl-L-methionine = N(6),N(6)-dimethyl-L-lysyl-[citrate synthase] + S-adenosyl-L-homocysteine + H(+). The enzyme catalyses N(6),N(6)-dimethyl-L-lysyl-[citrate synthase] + S-adenosyl-L-methionine = N(6),N(6),N(6)-trimethyl-L-lysyl-[citrate synthase] + S-adenosyl-L-homocysteine + H(+). Citrate synthase-lysine methyltransferase activity is inhibited by S-adenosylhomocysteine (AdoHcy) and oxaloacetate (OAA). Its function is as follows. Protein-lysine methyltransferase that selectively trimethylates citrate synthase (CS) in mitochondria. Seems to conduct trimethylation in a highly distributive manner rather than in a processive manner, and thus introduces a single methyl group per binding event. The protein is Citrate synthase-lysine N-methyltransferase CSKMT, mitochondrial of Danio rerio (Zebrafish).